The primary structure comprises 214 residues: Adenylate kinase (214 aa).

Position 10 to 15 (10 to 15) interacts with ATP; the sequence is GAGKGT. Residues 30 to 59 are NMP; that stretch reads STGDILRAAVKDMTPMGGKAKSFMDAGALV. AMP contacts are provided by residues T31, R36, 57–59, 85–88, and Q92; these read ALV and GFPR. The tract at residues 126 to 163 is LID; the sequence is GRRTCRNCGKGFHVSFDPPKSSGICDECSGELYQRDDD. R127 provides a ligand contact to ATP. C130, C133, C150, and C153 together coordinate Zn(2+). AMP-binding residues include R160 and R171. An ATP-binding site is contributed by G199.

This sequence belongs to the adenylate kinase family. As to quaternary structure, monomer.

It is found in the cytoplasm. It catalyses the reaction AMP + ATP = 2 ADP. It functions in the pathway purine metabolism; AMP biosynthesis via salvage pathway; AMP from ADP: step 1/1. Functionally, catalyzes the reversible transfer of the terminal phosphate group between ATP and AMP. Plays an important role in cellular energy homeostasis and in adenine nucleotide metabolism. The sequence is that of Adenylate kinase from Geotalea daltonii (strain DSM 22248 / JCM 15807 / FRC-32) (Geobacter daltonii).